Reading from the N-terminus, the 212-residue chain is Thymidylate kinase (212 aa).

10–17 (GPDGAGKS) lines the ATP pocket.

This sequence belongs to the thymidylate kinase family.

It catalyses the reaction dTMP + ATP = dTDP + ADP. Phosphorylation of dTMP to form dTDP in both de novo and salvage pathways of dTTP synthesis. The sequence is that of Thymidylate kinase from Lactobacillus helveticus (strain DPC 4571).